The primary structure comprises 227 residues: Phosphoribosylformylglycinamidine synthase subunit PurQ (227 aa).

Positions 3-227 (FAVCVFPGSN…LMLWYSLLSD (225 aa)) constitute a Glutamine amidotransferase type-1 domain. Cys-86 (nucleophile) is an active-site residue. Active-site residues include His-203 and Glu-205.

In terms of assembly, part of the FGAM synthase complex composed of 1 PurL, 1 PurQ and 2 PurS subunits.

The protein localises to the cytoplasm. The enzyme catalyses N(2)-formyl-N(1)-(5-phospho-beta-D-ribosyl)glycinamide + L-glutamine + ATP + H2O = 2-formamido-N(1)-(5-O-phospho-beta-D-ribosyl)acetamidine + L-glutamate + ADP + phosphate + H(+). The catalysed reaction is L-glutamine + H2O = L-glutamate + NH4(+). The protein operates within purine metabolism; IMP biosynthesis via de novo pathway; 5-amino-1-(5-phospho-D-ribosyl)imidazole from N(2)-formyl-N(1)-(5-phospho-D-ribosyl)glycinamide: step 1/2. In terms of biological role, part of the phosphoribosylformylglycinamidine synthase complex involved in the purines biosynthetic pathway. Catalyzes the ATP-dependent conversion of formylglycinamide ribonucleotide (FGAR) and glutamine to yield formylglycinamidine ribonucleotide (FGAM) and glutamate. The FGAM synthase complex is composed of three subunits. PurQ produces an ammonia molecule by converting glutamine to glutamate. PurL transfers the ammonia molecule to FGAR to form FGAM in an ATP-dependent manner. PurS interacts with PurQ and PurL and is thought to assist in the transfer of the ammonia molecule from PurQ to PurL. The protein is Phosphoribosylformylglycinamidine synthase subunit PurQ of Aquifex aeolicus (strain VF5).